Here is a 308-residue protein sequence, read N- to C-terminus: Tyrosine recombinase XerD (308 aa).

Residues 13–97 (PSSTEAIQRF…VFKRFFQWAL (85 aa)) form the Core-binding (CB) domain. Residues 118–302 (RVPKTLSEAQ…ARERLRTLHA (185 aa)) form the Tyr recombinase domain. Residues arginine 158, lysine 183, histidine 254, arginine 257, and histidine 280 contribute to the active site. Tyrosine 289 functions as the O-(3'-phospho-DNA)-tyrosine intermediate in the catalytic mechanism.

This sequence belongs to the 'phage' integrase family. XerD subfamily. As to quaternary structure, forms a cyclic heterotetrameric complex composed of two molecules of XerC and two molecules of XerD.

Its subcellular location is the cytoplasm. In terms of biological role, site-specific tyrosine recombinase, which acts by catalyzing the cutting and rejoining of the recombining DNA molecules. The XerC-XerD complex is essential to convert dimers of the bacterial chromosome into monomers to permit their segregation at cell division. It also contributes to the segregational stability of plasmids. The sequence is that of Tyrosine recombinase XerD from Ralstonia nicotianae (strain ATCC BAA-1114 / GMI1000) (Ralstonia solanacearum).